A 979-amino-acid polypeptide reads, in one-letter code: MHC class II regulatory factor RFX1 (979 aa).

3 disordered regions span residues 1–136, 181–227, and 370–405; these read MATQ…QVVQ, QSAA…PTGT, and TSTG…STGG. Pro residues predominate over residues 12–44; sequence APPPSQPPQAPPQAQPQPPPPPPPAAPQPPQPP. Low complexity predominate over residues 45–73; it reads TAAATPQPQYVTELQSPQPQAQPPGGQKQ. Phosphoserine is present on Ser-60. The span at 81-96 shows a compositional bias: pro residues; the sequence is VPAPSQPTGAPTPSPA. A compositionally biased stretch (polar residues) spans 114–126; that stretch reads ETVSEASPGSTAS. Over residues 127–136 the composition is skewed to low complexity; that stretch reads QTGVPTQVVQ. Composition is skewed to polar residues over residues 190-203 and 209-220; these read GQVS…QQVH and SPVQANSSSSKT. The span at 370–379 shows a compositional bias: low complexity; it reads TSTGAGASNS. A compositionally biased stretch (gly residues) spans 380–405; sequence SGGGGSGGGGGGGGGGGGGGSGSTGG. The segment at residues 438-513 is a DNA-binding region (RFX-type winged-helix); that stretch reads TVQWLLDNYE…YHYYGLRIKA (76 aa). The tract at residues 744 to 979 is necessary for dimerization; it reads FAQTLRRYTS…GLFVQALPSS (236 aa). Residues 915–960 form a disordered region; sequence SLNPLDPDKDEEEEEEEESEDELPQDISLAAGGESPALGPETLEPP. The segment covering 922-938 has biased composition (acidic residues); that stretch reads DKDEEEEEEEESEDELP. Ser-978 and Ser-979 each carry phosphoserine.

The protein belongs to the RFX family. In terms of assembly, homodimer; binds DNA as a homodimer. Heterodimer; heterodimerizes with RFX2 and RFX3.

Its subcellular location is the nucleus. Regulatory factor essential for MHC class II genes expression. Binds to the X boxes of MHC class II genes. Also binds to an inverted repeat (ENH1) required for hepatitis B virus genes expression and to the most upstream element (alpha) of the RPL30 promoter. This chain is MHC class II regulatory factor RFX1 (RFX1), found in Homo sapiens (Human).